Reading from the N-terminus, the 393-residue chain is Phosphoglycerate kinase (393 aa).

Residues 22-24 (DFN), Arg-37, 60-63 (HLGR), Arg-119, and Arg-152 each bind substrate. ATP is bound by residues Lys-202, Gly-293, Glu-324, and 350-353 (GGDS).

The protein belongs to the phosphoglycerate kinase family. As to quaternary structure, monomer.

It is found in the cytoplasm. The catalysed reaction is (2R)-3-phosphoglycerate + ATP = (2R)-3-phospho-glyceroyl phosphate + ADP. It functions in the pathway carbohydrate degradation; glycolysis; pyruvate from D-glyceraldehyde 3-phosphate: step 2/5. This Borreliella burgdorferi (strain ATCC 35210 / DSM 4680 / CIP 102532 / B31) (Borrelia burgdorferi) protein is Phosphoglycerate kinase (pgk).